A 103-amino-acid chain; its full sequence is N(4)-acetylcytidine amidohydrolase (103 aa).

The ASCH domain maps to 6–101; sequence ITFFQRFQDD…QTQFYVIEFK (96 aa). The active-site Proton acceptor is the K21. T24 functions as the Nucleophile in the catalytic mechanism. E74 acts as the Proton donor in catalysis.

This sequence belongs to the N(4)-acetylcytidine amidohydrolase family.

The enzyme catalyses N(4)-acetylcytidine + H2O = cytidine + acetate + H(+). It carries out the reaction N(4)-acetyl-2'-deoxycytidine + H2O = 2'-deoxycytidine + acetate + H(+). The catalysed reaction is N(4)-acetylcytosine + H2O = cytosine + acetate + H(+). Catalyzes the hydrolysis of N(4)-acetylcytidine (ac4C). The sequence is that of N(4)-acetylcytidine amidohydrolase (yqfB) from Escherichia fergusonii (strain ATCC 35469 / DSM 13698 / CCUG 18766 / IAM 14443 / JCM 21226 / LMG 7866 / NBRC 102419 / NCTC 12128 / CDC 0568-73).